Consider the following 210-residue polypeptide: MVRDSIVVKGNREGLNVIIDMNKFQNFDEMLEIFIHKLSIGKKFYKGSTIIITTQLKEFNEKQISKFEEVLFEDFLIKDCIFKDIRETKNKVFTGVYEGRTKFYRRTLRSGQVINYPGNIVIVGDVNPGSEVYAGGNVIVIGNLCGEVHAGASGNTKAIIAAFKLQPSILQIANIMTRSPEDGPKPSYPEVARIKDGIIIVEPYLPNKFV.

This sequence belongs to the MinC family. In terms of assembly, interacts with MinD and FtsZ.

In terms of biological role, cell division inhibitor that blocks the formation of polar Z ring septums. Rapidly oscillates between the poles of the cell to destabilize FtsZ filaments that have formed before they mature into polar Z rings. Prevents FtsZ polymerization. In Clostridium novyi (strain NT), this protein is Probable septum site-determining protein MinC.